Reading from the N-terminus, the 619-residue chain is MPIQVLPPQLANQIAAGEVVERPASVVKELVENSLDAGATRIDIDIERGGAKLIRIRDNGCGIKKDELALALARHATSKIASLDDLEAIISLGFRGEALASISSVSRLTLTSRTAEQAEAWQAYAEGRDMDVTVKPAAHPVGTTLEVLDLFYNTPARRKFMRTEKTEFNHIDEIIRRIALARFDVTLNLSHNGKMVRQYRAVAQDGQKERRLGALCGAPFLEQALVIEWQHGDLTLRGWVADPHHTTAALAEIQYCYVNGRMMRDRLINHAIRQACEDKLGGDRQPAFVLYLEIDPHQVDVNVHPAKHEVRFHQSRLVHDFIYQGVLSVLQQQLDAPLPLAEEAPAPRHIPENRVAAGRNHFAEPASAREPAAPRYSTSSGATGGRQPAASWPHAQPGYQKQQGEVYRQLLQTPAPRQPALAPEAETAAPSLAGHSQSFGRVLTIVGADCALLERDGNIHLLALPVAERWLRQAQLTPGQTPVCAQPLLIPLRLKVSAEEKSALEKAQTPLTDLGIEFQSDAQHVTIRAVPLPLRQQNLQILIPELIGYLAQQSAFDAGNIAQWIARNLMSEHPQWTMAQAITLLADVERLCPQLVKAPPGGLLQPVDLHSVMNALKHE.

Positions 364–375 (EPASAREPAAPR) are enriched in low complexity. The segment at 364 to 399 (EPASAREPAAPRYSTSSGATGGRQPAASWPHAQPGY) is disordered.

It belongs to the DNA mismatch repair MutL/HexB family.

Its function is as follows. This protein is involved in the repair of mismatches in DNA. It is required for dam-dependent methyl-directed DNA mismatch repair. May act as a 'molecular matchmaker', a protein that promotes the formation of a stable complex between two or more DNA-binding proteins in an ATP-dependent manner without itself being part of a final effector complex. The chain is DNA mismatch repair protein MutL from Citrobacter koseri (strain ATCC BAA-895 / CDC 4225-83 / SGSC4696).